We begin with the raw amino-acid sequence, 127 residues long: Putative platinum sensitivity protein 1 (127 aa).

This is Putative platinum sensitivity protein 1 (PSY1) from Saccharomyces cerevisiae (strain ATCC 204508 / S288c) (Baker's yeast).